The chain runs to 298 residues: MGDTWAQLPWPGPPHSALLLVFFLLAAGVMHSDAGTSCPVLCTCRNQVVDCSNQRLFSVPPDLPMDTRNLSLAHNRIAAVPPGYLTCYMELRVLDLRNNSLMELPPGLFLHAKRLAHLDLSYNNLSHVPADMFREAHGLVHIDLSHNPWLRRVHPQAFQGLVHLRDLDLSYGGLAFLSLEALEGLPGLVTLQIGGNPWVCGCTMEPLLKWLRNRIQRCTADSQLAECRGPPEVEGAPLFSLTEESFKACHLTLTLDDYLFIAFVGFVVSIASVATNFLLGITANCCHRWSKANEEEEI.

The first 34 residues, 1–34 (MGDTWAQLPWPGPPHSALLLVFFLLAAGVMHSDA), serve as a signal peptide directing secretion. Residues 35 to 65 (GTSCPVLCTCRNQVVDCSNQRLFSVPPDLPM) enclose the LRRNT domain. 2 cysteine pairs are disulfide-bonded: cysteine 38–cysteine 44 and cysteine 42–cysteine 51. 5 LRR repeats span residues 66–87 (DTRN…YLTC), 90–111 (ELRV…LFLH), 114–135 (RLAH…MFRE), 138–160 (GLVH…AFQG), and 163–186 (HLRD…EGLP). The LRRCT domain maps to 196–251 (NPWVCGCTMEPLLKWLRNRIQRCTADSQLAECRGPPEVEGAPLFSLTEESFKACHL). 2 cysteine pairs are disulfide-bonded: cysteine 200-cysteine 227 and cysteine 202-cysteine 249. Residues 259–279 (LFIAFVGFVVSIASVATNFLL) traverse the membrane as a helical segment.

In terms of assembly, interacts with KCNMA1.

The protein resides in the cell membrane. Auxiliary protein of the large-conductance, voltage and calcium-activated potassium channel (BK alpha). Modulates gating properties by producing a marked shift in the BK channel's voltage dependence of activation in the hyperpolarizing direction, and in the absence of calcium. In Mus musculus (Mouse), this protein is Leucine-rich repeat-containing protein 55 (Lrrc55).